The chain runs to 438 residues: Glutamate-1-semialdehyde 2,1-aminomutase (438 aa).

Lys-272 carries the post-translational modification N6-(pyridoxal phosphate)lysine.

This sequence belongs to the class-III pyridoxal-phosphate-dependent aminotransferase family. HemL subfamily. Homodimer. It depends on pyridoxal 5'-phosphate as a cofactor.

The protein resides in the cytoplasm. It carries out the reaction (S)-4-amino-5-oxopentanoate = 5-aminolevulinate. It functions in the pathway porphyrin-containing compound metabolism; protoporphyrin-IX biosynthesis; 5-aminolevulinate from L-glutamyl-tRNA(Glu): step 2/2. It participates in porphyrin-containing compound metabolism; chlorophyll biosynthesis. The chain is Glutamate-1-semialdehyde 2,1-aminomutase from Chloroflexus aggregans (strain MD-66 / DSM 9485).